Here is a 308-residue protein sequence, read N- to C-terminus: tRNA pseudouridine synthase B (308 aa).

Catalysis depends on aspartate 47, which acts as the Nucleophile.

This sequence belongs to the pseudouridine synthase TruB family. Type 1 subfamily.

The catalysed reaction is uridine(55) in tRNA = pseudouridine(55) in tRNA. In terms of biological role, responsible for synthesis of pseudouridine from uracil-55 in the psi GC loop of transfer RNAs. The chain is tRNA pseudouridine synthase B from Xanthomonas campestris pv. campestris (strain B100).